The sequence spans 173 residues: RNA pyrophosphohydrolase (173 aa).

The Nudix hydrolase domain occupies 6–149 (GYRPNVGIIL…KRHVYRRALR (144 aa)). The Nudix box motif lies at 38–59 (GGIRRDESPLDAMYRELAEETG).

Belongs to the Nudix hydrolase family. RppH subfamily. A divalent metal cation serves as cofactor.

Functionally, accelerates the degradation of transcripts by removing pyrophosphate from the 5'-end of triphosphorylated RNA, leading to a more labile monophosphorylated state that can stimulate subsequent ribonuclease cleavage. The protein is RNA pyrophosphohydrolase of Thioalkalivibrio sulfidiphilus (strain HL-EbGR7).